The following is a 360-amino-acid chain: MLMFLTHFAEHVTPFNVFRYITFRTGGAMITSALIVFLFGPTIINSLRVRQGKGQPIRADGPQTHFKKAGTPTMGGLMIMTGILASCLLWANLASVYVWVVLMVSVGFGAIGFYDDYLKVTKQSDKGFSGKARLGIEFLIAAIAAFTIMRAGQEPFSSSLTFPFVKQLVINLSWFFIPFAAFVMVGAGNAVNLTDGLDGLAIVPVMVAAASFGFIAYLSGNAIFADYLQIHFVPGTGELAVVLGAVIGAGLGFLWFNAPPAAIFMGDTGSLALGGMLGTVAVATKHEIVLAIIGGLFVMEALSVIIQVGFFKMTGRRVFLMAPIHHHFEKKGWTESQVVIRFWIVAIILAMIGLSTLKLR.

A run of 10 helical transmembrane segments spans residues Gly-27–Leu-47, Thr-71–Ala-91, Leu-93–Phe-113, Phe-128–Ile-148, Leu-168–Gly-188, Gly-199–Ser-219, Leu-239–Pro-259, Ala-262–Val-282, Ile-288–Val-308, and Gln-337–Leu-357.

Belongs to the glycosyltransferase 4 family. MraY subfamily. It depends on Mg(2+) as a cofactor.

It is found in the cell inner membrane. The enzyme catalyses UDP-N-acetyl-alpha-D-muramoyl-L-alanyl-gamma-D-glutamyl-meso-2,6-diaminopimeloyl-D-alanyl-D-alanine + di-trans,octa-cis-undecaprenyl phosphate = di-trans,octa-cis-undecaprenyl diphospho-N-acetyl-alpha-D-muramoyl-L-alanyl-D-glutamyl-meso-2,6-diaminopimeloyl-D-alanyl-D-alanine + UMP. It functions in the pathway cell wall biogenesis; peptidoglycan biosynthesis. Its function is as follows. Catalyzes the initial step of the lipid cycle reactions in the biosynthesis of the cell wall peptidoglycan: transfers peptidoglycan precursor phospho-MurNAc-pentapeptide from UDP-MurNAc-pentapeptide onto the lipid carrier undecaprenyl phosphate, yielding undecaprenyl-pyrophosphoryl-MurNAc-pentapeptide, known as lipid I. This is Phospho-N-acetylmuramoyl-pentapeptide-transferase from Brucella abortus (strain S19).